The following is a 628-amino-acid chain: Glutamine--fructose-6-phosphate aminotransferase [isomerizing] (628 aa).

Catalysis depends on C2, which acts as the Nucleophile; for GATase activity. The Glutamine amidotransferase type-2 domain occupies 2-229 (CGIVGYVGHR…QDQAVVLTAD (228 aa)). Positions 61 to 94 (ETDSNDGDGLGGSTGLGHTRWATHGRPTDRNAHP) are disordered. 2 consecutive SIS domains span residues 301 to 440 (SDQE…ARGT) and 473 to 618 (LAER…VDKP). The active-site For Fru-6P isomerization activity is the K623.

Homodimer.

Its subcellular location is the cytoplasm. The enzyme catalyses D-fructose 6-phosphate + L-glutamine = D-glucosamine 6-phosphate + L-glutamate. Functionally, catalyzes the first step in hexosamine metabolism, converting fructose-6P into glucosamine-6P using glutamine as a nitrogen source. The sequence is that of Glutamine--fructose-6-phosphate aminotransferase [isomerizing] from Mycolicibacterium smegmatis (strain ATCC 700084 / mc(2)155) (Mycobacterium smegmatis).